The chain runs to 459 residues: Bifunctional protein GlmU (459 aa).

The interval 1–229 (MTNYAIILAA…FDESLGVNDR (229 aa)) is pyrophosphorylase. Residues 8–11 (LAAG), Lys22, Gln72, and 77–78 (GT) contribute to the UDP-N-acetyl-alpha-D-glucosamine site. Asp102 serves as a coordination point for Mg(2+). 4 residues coordinate UDP-N-acetyl-alpha-D-glucosamine: Gly139, Glu154, Asn169, and Asn227. Position 227 (Asn227) interacts with Mg(2+). Residues 230 to 250 (VALATAESVMRRRINQKHMVN) are linker. An N-acetyltransferase region spans residues 251 to 459 (GVSFVNPDAT…KRLPHHPQNK (209 aa)). 2 residues coordinate UDP-N-acetyl-alpha-D-glucosamine: Arg332 and Lys350. His362 functions as the Proton acceptor in the catalytic mechanism. Positions 365 and 376 each coordinate UDP-N-acetyl-alpha-D-glucosamine. Acetyl-CoA-binding positions include Ala379, 385–386 (NY), Ser404, Ala422, and Arg439.

In the N-terminal section; belongs to the N-acetylglucosamine-1-phosphate uridyltransferase family. The protein in the C-terminal section; belongs to the transferase hexapeptide repeat family. In terms of assembly, homotrimer. Requires Mg(2+) as cofactor.

The protein resides in the cytoplasm. The enzyme catalyses alpha-D-glucosamine 1-phosphate + acetyl-CoA = N-acetyl-alpha-D-glucosamine 1-phosphate + CoA + H(+). The catalysed reaction is N-acetyl-alpha-D-glucosamine 1-phosphate + UTP + H(+) = UDP-N-acetyl-alpha-D-glucosamine + diphosphate. Its pathway is nucleotide-sugar biosynthesis; UDP-N-acetyl-alpha-D-glucosamine biosynthesis; N-acetyl-alpha-D-glucosamine 1-phosphate from alpha-D-glucosamine 6-phosphate (route II): step 2/2. It participates in nucleotide-sugar biosynthesis; UDP-N-acetyl-alpha-D-glucosamine biosynthesis; UDP-N-acetyl-alpha-D-glucosamine from N-acetyl-alpha-D-glucosamine 1-phosphate: step 1/1. The protein operates within bacterial outer membrane biogenesis; LPS lipid A biosynthesis. In terms of biological role, catalyzes the last two sequential reactions in the de novo biosynthetic pathway for UDP-N-acetylglucosamine (UDP-GlcNAc). The C-terminal domain catalyzes the transfer of acetyl group from acetyl coenzyme A to glucosamine-1-phosphate (GlcN-1-P) to produce N-acetylglucosamine-1-phosphate (GlcNAc-1-P), which is converted into UDP-GlcNAc by the transfer of uridine 5-monophosphate (from uridine 5-triphosphate), a reaction catalyzed by the N-terminal domain. The sequence is that of Bifunctional protein GlmU from Streptococcus gordonii (strain Challis / ATCC 35105 / BCRC 15272 / CH1 / DL1 / V288).